The following is a 163-amino-acid chain: Endoribonuclease YbeY (163 aa).

Zn(2+)-binding residues include histidine 121, histidine 125, and histidine 131.

The protein belongs to the endoribonuclease YbeY family. Zn(2+) serves as cofactor.

It localises to the cytoplasm. Its function is as follows. Single strand-specific metallo-endoribonuclease involved in late-stage 70S ribosome quality control and in maturation of the 3' terminus of the 16S rRNA. The chain is Endoribonuclease YbeY from Synechococcus sp. (strain JA-2-3B'a(2-13)) (Cyanobacteria bacterium Yellowstone B-Prime).